The primary structure comprises 129 residues: Beta-galactoside-binding lectin (129 aa).

The residue at position 1 (Ser1) is an N-acetylserine. The Galectin domain maps to 4–129 (GVVDERMSFK…EARIYSIEIK (126 aa)). 69–75 (WGTEQRE) is a binding site for a beta-D-galactoside.

This protein binds beta-galactoside. Its physiological function is not yet known. The protein is Beta-galactoside-binding lectin of Electrophorus electricus (Electric eel).